Reading from the N-terminus, the 46-residue chain is Large ribosomal subunit protein bL34c (46 aa).

This sequence belongs to the bacterial ribosomal protein bL34 family.

The protein localises to the plastid. Its subcellular location is the chloroplast. This chain is Large ribosomal subunit protein bL34c, found in Pyropia yezoensis (Susabi-nori).